We begin with the raw amino-acid sequence, 108 residues long: Glutaredoxin-C10 (108 aa).

The region spanning 1–107 is the Glutaredoxin domain; sequence MERVAKLASE…PMLKNAGALW (107 aa). C21 and C24 are oxidised to a cystine. Residues 105 to 108 carry the Responsive for interaction with TGA factors motif; the sequence is ALWL.

It belongs to the glutaredoxin family. CC-type subfamily.

It localises to the cytoplasm. Its subcellular location is the nucleus. Its function is as follows. Has a glutathione-disulfide oxidoreductase activity in the presence of NADPH and glutathione reductase. Reduces low molecular weight disulfides and proteins. This Oryza sativa subsp. japonica (Rice) protein is Glutaredoxin-C10 (GRXC10).